The following is a 366-amino-acid chain: Chorismate synthase (366 aa).

Residues Arg48 and Arg54 each coordinate NADP(+). Residues 125–127 (RSS), 238–239 (NA), Gly278, 293–297 (KPTSS), and Arg319 contribute to the FMN site.

The protein belongs to the chorismate synthase family. Homotetramer. Requires FMNH2 as cofactor.

It catalyses the reaction 5-O-(1-carboxyvinyl)-3-phosphoshikimate = chorismate + phosphate. The protein operates within metabolic intermediate biosynthesis; chorismate biosynthesis; chorismate from D-erythrose 4-phosphate and phosphoenolpyruvate: step 7/7. Catalyzes the anti-1,4-elimination of the C-3 phosphate and the C-6 proR hydrogen from 5-enolpyruvylshikimate-3-phosphate (EPSP) to yield chorismate, which is the branch point compound that serves as the starting substrate for the three terminal pathways of aromatic amino acid biosynthesis. This reaction introduces a second double bond into the aromatic ring system. The chain is Chorismate synthase from Neisseria meningitidis serogroup B (strain ATCC BAA-335 / MC58).